The primary structure comprises 123 residues: WAP four-disulfide core domain protein 2 (123 aa).

The signal sequence occupies residues 1–26 (MPACRLGLLVASLLLGLLLGLPPVTG). 2 consecutive WAP domains span residues 28–69 (GAEK…VTIC) and 72–122 (PNEK…VTPV). Intrachain disulfides connect Cys-35–Cys-61, Cys-44–Cys-65, Cys-48–Cys-60, Cys-54–Cys-69, Cys-79–Cys-109, Cys-92–Cys-113, Cys-96–Cys-108, and Cys-102–Cys-118.

Homotrimer; disulfide-linked. Detected in the distal parts of the epididymis.

It localises to the secreted. Functionally, broad range protease inhibitor. In Sus scrofa (Pig), this protein is WAP four-disulfide core domain protein 2 (WFDC2).